A 315-amino-acid chain; its full sequence is Ribose-phosphate pyrophosphokinase (315 aa).

ATP contacts are provided by residues 37–39 (DSE) and 96–97 (RQ). 2 residues coordinate Mg(2+): His-131 and Asp-170. The active site involves Lys-194. D-ribose 5-phosphate is bound by residues Arg-196, Asp-220, and 224–228 (DTGGT).

It belongs to the ribose-phosphate pyrophosphokinase family. Class I subfamily. Homohexamer. Mg(2+) serves as cofactor.

It is found in the cytoplasm. It carries out the reaction D-ribose 5-phosphate + ATP = 5-phospho-alpha-D-ribose 1-diphosphate + AMP + H(+). Its pathway is metabolic intermediate biosynthesis; 5-phospho-alpha-D-ribose 1-diphosphate biosynthesis; 5-phospho-alpha-D-ribose 1-diphosphate from D-ribose 5-phosphate (route I): step 1/1. In terms of biological role, involved in the biosynthesis of the central metabolite phospho-alpha-D-ribosyl-1-pyrophosphate (PRPP) via the transfer of pyrophosphoryl group from ATP to 1-hydroxyl of ribose-5-phosphate (Rib-5-P). The chain is Ribose-phosphate pyrophosphokinase from Marinomonas sp. (strain MWYL1).